Here is a 195-residue protein sequence, read N- to C-terminus: MRIKICGITRVEDVLFAEKAGADAIGVVMYSPTSRRSVPDAKAREIFSALGPFVTRVVVTHTESESDLEKILAIRPDAIQISHPFVFEKYPGVRVLRVIGRGDAVPTDCDAVIVDESMGAGKAFDQEFAKVVAKTSRVPVILAGGLTPENVGLAIREIRPHAVDVASGVETEPGIKDHTKIAAFIRAAREADHGT.

The protein belongs to the TrpF family.

The catalysed reaction is N-(5-phospho-beta-D-ribosyl)anthranilate = 1-(2-carboxyphenylamino)-1-deoxy-D-ribulose 5-phosphate. Its pathway is amino-acid biosynthesis; L-tryptophan biosynthesis; L-tryptophan from chorismate: step 3/5. This chain is N-(5'-phosphoribosyl)anthranilate isomerase, found in Methanoregula boonei (strain DSM 21154 / JCM 14090 / 6A8).